We begin with the raw amino-acid sequence, 103 residues long: Small ribosomal subunit protein uS10 (103 aa).

The protein belongs to the universal ribosomal protein uS10 family. In terms of assembly, part of the 30S ribosomal subunit.

Involved in the binding of tRNA to the ribosomes. In Stutzerimonas stutzeri (strain A1501) (Pseudomonas stutzeri), this protein is Small ribosomal subunit protein uS10.